A 273-amino-acid polypeptide reads, in one-letter code: Ribosomal RNA small subunit methyltransferase A (273 aa).

S-adenosyl-L-methionine is bound by residues Asn-18, Leu-20, Gly-45, Glu-66, Asp-91, and Asn-113.

Belongs to the class I-like SAM-binding methyltransferase superfamily. rRNA adenine N(6)-methyltransferase family. RsmA subfamily.

The protein localises to the cytoplasm. It carries out the reaction adenosine(1518)/adenosine(1519) in 16S rRNA + 4 S-adenosyl-L-methionine = N(6)-dimethyladenosine(1518)/N(6)-dimethyladenosine(1519) in 16S rRNA + 4 S-adenosyl-L-homocysteine + 4 H(+). In terms of biological role, specifically dimethylates two adjacent adenosines (A1518 and A1519) in the loop of a conserved hairpin near the 3'-end of 16S rRNA in the 30S particle. May play a critical role in biogenesis of 30S subunits. This chain is Ribosomal RNA small subunit methyltransferase A, found in Shigella dysenteriae serotype 1 (strain Sd197).